The primary structure comprises 361 residues: MRFSDNLAKILDKYENLGNKLSSGIMGDEFVKASKEYAELEDVVAKIKEYNKAKSELEEANNFKLEVGLDNATLEMIEDEIHTLENSLPKLERAVKIALLPKDDADSKSAIIEVRAGSGGEEAALFAAVLFNMYQRYAELKGWRFEILAISDTGIGGYKEASASIKGKDVFSKLKFESGVHRVQRVPETESQGRIHTSAATVAVLPEAEEVDIQIEDKDLRIDTYRASGAGGQHVNTTDSAVRITHIPTGITVALQDEKSQHKNKAKALKILRARIYEEERRKKEQERADSRRGQVGSGDRSERIRTYNFPQGRVSDHRINLTLYKIDEVVKNGQLDEFVEALIADDEAKKLLGIYSKNTA.

Gln-233 carries the post-translational modification N5-methylglutamine. Basic and acidic residues predominate over residues 280–293 (ERRKKEQERADSRR). The interval 280 to 307 (ERRKKEQERADSRRGQVGSGDRSERIRT) is disordered.

It belongs to the prokaryotic/mitochondrial release factor family. Methylated by PrmC. Methylation increases the termination efficiency of RF1.

It is found in the cytoplasm. Peptide chain release factor 1 directs the termination of translation in response to the peptide chain termination codons UAG and UAA. This is Peptide chain release factor 1 from Rickettsia massiliae (strain Mtu5).